Reading from the N-terminus, the 62-residue chain is Large ribosomal subunit protein bL28 (62 aa).

Residues 1–28 are disordered; sequence MARKCVITGRKSRSGNSRSHAMNASKRT. Positions 14–26 are enriched in polar residues; sequence SGNSRSHAMNASK.

Belongs to the bacterial ribosomal protein bL28 family.

This chain is Large ribosomal subunit protein bL28, found in Bacillus licheniformis (strain ATCC 14580 / DSM 13 / JCM 2505 / CCUG 7422 / NBRC 12200 / NCIMB 9375 / NCTC 10341 / NRRL NRS-1264 / Gibson 46).